The sequence spans 567 residues: Arginine--tRNA ligase (567 aa).

The short motif at 121–131 (ANPNGPLHVGH) is the 'HIGH' region element.

Belongs to the class-I aminoacyl-tRNA synthetase family.

It is found in the cytoplasm. The catalysed reaction is tRNA(Arg) + L-arginine + ATP = L-arginyl-tRNA(Arg) + AMP + diphosphate. In Methanosarcina acetivorans (strain ATCC 35395 / DSM 2834 / JCM 12185 / C2A), this protein is Arginine--tRNA ligase.